The sequence spans 249 residues: Methylthioribulose-1-phosphate dehydratase (249 aa).

Residues histidine 103 and histidine 105 each contribute to the Zn(2+) site.

It belongs to the aldolase class II family. MtnB subfamily. It depends on Zn(2+) as a cofactor.

It carries out the reaction 5-(methylsulfanyl)-D-ribulose 1-phosphate = 5-methylsulfanyl-2,3-dioxopentyl phosphate + H2O. The protein operates within amino-acid biosynthesis; L-methionine biosynthesis via salvage pathway; L-methionine from S-methyl-5-thio-alpha-D-ribose 1-phosphate: step 2/6. Its function is as follows. Catalyzes the dehydration of methylthioribulose-1-phosphate (MTRu-1-P) into 2,3-diketo-5-methylthiopentyl-1-phosphate (DK-MTP-1-P). The sequence is that of Methylthioribulose-1-phosphate dehydratase from Leptospira interrogans serogroup Icterohaemorrhagiae serovar Lai (strain 56601).